We begin with the raw amino-acid sequence, 314 residues long: Lipoyl synthase (314 aa).

The [4Fe-4S] cluster site is built by C61, C66, C72, C87, C91, C94, and S301. The Radical SAM core domain maps to 73 to 290 (FGRGTATFMI…ERIATNLGFS (218 aa)).

This sequence belongs to the radical SAM superfamily. Lipoyl synthase family. [4Fe-4S] cluster is required as a cofactor.

The protein resides in the cytoplasm. The catalysed reaction is [[Fe-S] cluster scaffold protein carrying a second [4Fe-4S](2+) cluster] + N(6)-octanoyl-L-lysyl-[protein] + 2 oxidized [2Fe-2S]-[ferredoxin] + 2 S-adenosyl-L-methionine + 4 H(+) = [[Fe-S] cluster scaffold protein] + N(6)-[(R)-dihydrolipoyl]-L-lysyl-[protein] + 4 Fe(3+) + 2 hydrogen sulfide + 2 5'-deoxyadenosine + 2 L-methionine + 2 reduced [2Fe-2S]-[ferredoxin]. Its pathway is protein modification; protein lipoylation via endogenous pathway; protein N(6)-(lipoyl)lysine from octanoyl-[acyl-carrier-protein]: step 2/2. Catalyzes the radical-mediated insertion of two sulfur atoms into the C-6 and C-8 positions of the octanoyl moiety bound to the lipoyl domains of lipoate-dependent enzymes, thereby converting the octanoylated domains into lipoylated derivatives. This is Lipoyl synthase from Nitrosomonas eutropha (strain DSM 101675 / C91 / Nm57).